The chain runs to 151 residues: Gametocyte-specific factor 1-like (151 aa).

2 consecutive CHHC U11-48K-type zinc fingers follow at residues 6–33 (IEIC…RKKN) and 40–67 (MASC…VNRS). Residues cysteine 9, histidine 15, histidine 25, cysteine 29, cysteine 43, histidine 49, histidine 59, and cysteine 63 each coordinate Zn(2+). The segment at 130–151 (QESRGGDQCPEDPQTRTRKANF) is disordered.

It belongs to the UPF0224 (FAM112) family.

In Mus musculus (Mouse), this protein is Gametocyte-specific factor 1-like (Gtsf1l).